The primary structure comprises 1066 residues: Bifunctional cytochrome P450/NADPH--P450 reductase (1066 aa).

Positions 1–480 (MAESVPIPEP…LAGNGATSSS (480 aa)) are cytochrome P450. Cys407 lines the heme pocket. An NADPH-P-450 reductase region spans residues 481–1066 (THNIKAAANL…NERFATDVFD (586 aa)). The Flavodoxin-like domain occupies 500-641 (MAIFYGSNSG…DFEAWEDIVL (142 aa)). Residues 506-511 (SNSGTC), 554-557 (SYEG), Cys588, and Thr596 each bind FMN. The region spanning 676-904 (QDVEEALVVA…RASSEAFHLP (229 aa)) is the FAD-binding FR-type domain.

The protein in the N-terminal section; belongs to the cytochrome P450 family. Requires FAD as cofactor. It depends on FMN as a cofactor. Heme is required as a cofactor.

It is found in the membrane. The catalysed reaction is an organic molecule + reduced [NADPH--hemoprotein reductase] + O2 = an alcohol + oxidized [NADPH--hemoprotein reductase] + H2O + H(+). It catalyses the reaction 2 oxidized [cytochrome P450] + NADPH = 2 reduced [cytochrome P450] + NADP(+) + H(+). Its activity is regulated as follows. Stimulated NADPH--cytochrome reductase activity in the presence of substrate. Inhibited by fatty acid substrates longer than 13 carbons and the degree of inhibition increases with increasing chain length. Functions as a fatty acid monooxygenase. Catalyzes hydroxylation of fatty acids at omega-1, omega-2 and omega-3 positions. Shows activity toward fatty acids with a chain length of 9-18 carbons with optimum chain lengths of 12-14 carbons (lauric, tridecylic and myristic acids). Can also use shorter saturated fatty acids with a chain length of 9 or 10 carbons as substrates. Also displays a NADPH-dependent reductase activity in the C-terminal domain, which allows electron transfer from NADPH to the heme iron of the cytochrome P450 N-terminal domain. The chain is Bifunctional cytochrome P450/NADPH--P450 reductase from Fusarium oxysporum (Fusarium vascular wilt).